A 425-amino-acid polypeptide reads, in one-letter code: Serine--tRNA ligase (425 aa).

230–232 serves as a coordination point for L-serine; that stretch reads TAE. Residue 261–263 coordinates ATP; it reads RSE. Residue Glu284 participates in L-serine binding. 348–351 lines the ATP pocket; the sequence is EISS. L-serine is bound at residue Ser384.

This sequence belongs to the class-II aminoacyl-tRNA synthetase family. Type-1 seryl-tRNA synthetase subfamily. In terms of assembly, homodimer. The tRNA molecule binds across the dimer.

The protein resides in the cytoplasm. The catalysed reaction is tRNA(Ser) + L-serine + ATP = L-seryl-tRNA(Ser) + AMP + diphosphate + H(+). It catalyses the reaction tRNA(Sec) + L-serine + ATP = L-seryl-tRNA(Sec) + AMP + diphosphate + H(+). Its pathway is aminoacyl-tRNA biosynthesis; selenocysteinyl-tRNA(Sec) biosynthesis; L-seryl-tRNA(Sec) from L-serine and tRNA(Sec): step 1/1. Catalyzes the attachment of serine to tRNA(Ser). Is also able to aminoacylate tRNA(Sec) with serine, to form the misacylated tRNA L-seryl-tRNA(Sec), which will be further converted into selenocysteinyl-tRNA(Sec). The chain is Serine--tRNA ligase from Streptococcus pyogenes serotype M2 (strain MGAS10270).